The sequence spans 653 residues: PAN2-PAN3 deadenylation complex subunit PAN3 (653 aa).

2 disordered regions span residues Met1–Lys21 and His45–Asp128. A C3H1-type zinc finger spans residues Asn19–Asn48. Positions Ser68 to Ser95 are enriched in low complexity. Over residues Gly108–Ser119 the composition is skewed to polar residues. The interval Gln256–Ser516 is pseudokinase domain. Residues Arg308, Asp357–Thr364, and Ser416–Lys417 each bind ATP. Residues Ser517–Phe555 adopt a coiled-coil conformation. Residues Ile556 to His653 are knob domain.

The protein belongs to the protein kinase superfamily. PAN3 family. Homodimer. Forms a heterotrimer with a catalytic subunit pan2 to form the poly(A)-nuclease (PAN) deadenylation complex. Interacts (via PAM-2 motif) with poly(A)-binding protein pab1 (via PABC domain), conferring substrate specificity of the enzyme complex.

It is found in the cytoplasm. Functionally, regulatory subunit of the poly(A)-nuclease (PAN) deadenylation complex, one of two cytoplasmic mRNA deadenylases involved in mRNA turnover. PAN specifically shortens poly(A) tails of RNA and the activity is stimulated by poly(A)-binding protein pab1. PAN deadenylation is followed by rapid degradation of the shortened mRNA tails by the CCR4-NOT complex. Deadenylated mRNAs are then degraded by two alternative mechanisms, namely exosome-mediated 3'-5' exonucleolytic degradation, or deadenylation-dependent mRNA decaping and subsequent 5'-3' exonucleolytic degradation by xrn1. May also be involved in post-transcriptional maturation of mRNA poly(A) tails. pan3 acts as a positive regulator for PAN activity, recruiting the catalytic subunit pan2 to mRNA via its interaction with RNA and with pab1. The chain is PAN2-PAN3 deadenylation complex subunit PAN3 from Aspergillus terreus (strain NIH 2624 / FGSC A1156).